The chain runs to 106 residues: Large ribosomal subunit protein bL21 (106 aa).

It belongs to the bacterial ribosomal protein bL21 family. As to quaternary structure, part of the 50S ribosomal subunit. Contacts protein L20.

Functionally, this protein binds to 23S rRNA in the presence of protein L20. The chain is Large ribosomal subunit protein bL21 from Thermosipho africanus (strain TCF52B).